The following is a 204-amino-acid chain: Thymidylate kinase (204 aa).

Residue 11–18 participates in ATP binding; that stretch reads GLDKSGKT.

The protein belongs to the thymidylate kinase family.

It carries out the reaction dTMP + ATP = dTDP + ADP. Its pathway is pyrimidine metabolism; dTTP biosynthesis. The polypeptide is Thymidylate kinase (TMK) (Camelus).